The following is a 280-amino-acid chain: Succinate dehydrogenase [ubiquinone] iron-sulfur subunit, mitochondrial (280 aa).

Residues 1 to 28 (MAAVVAVSLKRWFPATTLGGACLQACRG) constitute a mitochondrion transit peptide. Residues 40–131 (KKFAIYRWDP…DKVSKIYPLP (92 aa)) enclose the 2Fe-2S ferredoxin-type domain. Lysine 51 and lysine 55 each carry N6-acetyllysine. 4 residues coordinate [2Fe-2S] cluster: cysteine 93, cysteine 98, cysteine 101, and cysteine 113. Residues 146 to 218 (FYAQYKSIEP…PAVLMQAYRW (73 aa)) are interaction with SDHAF1. The 31-residue stretch at 176-206 (EREKLDGLYECILCACCSTSCPSYWWNGDKY) folds into the 4Fe-4S ferredoxin-type domain. 3 residues coordinate [4Fe-4S] cluster: cysteine 186, cysteine 189, and cysteine 192. Cysteine 196 lines the [3Fe-4S] cluster pocket. Tryptophan 201 contacts a ubiquinone. Residues cysteine 243 and cysteine 249 each coordinate [3Fe-4S] cluster. Cysteine 253 contributes to the [4Fe-4S] cluster binding site.

This sequence belongs to the succinate dehydrogenase/fumarate reductase iron-sulfur protein family. As to quaternary structure, component of complex II composed of four subunits: the flavoprotein (FP) SDHA, iron-sulfur protein (IP) SDHB, and a cytochrome b560 composed of SDHC and SDHD. Interacts with SDHAF1; the interaction is required for iron-sulfur cluster incorporation into SDHB. [2Fe-2S] cluster is required as a cofactor. The cofactor is [3Fe-4S] cluster. [4Fe-4S] cluster serves as cofactor.

The protein resides in the mitochondrion inner membrane. The catalysed reaction is a quinone + succinate = fumarate + a quinol. The enzyme catalyses (R)-malate + a quinone = enol-oxaloacetate + a quinol. It carries out the reaction (S)-malate + a quinone = enol-oxaloacetate + a quinol. It functions in the pathway carbohydrate metabolism; tricarboxylic acid cycle; fumarate from succinate (eukaryal route): step 1/1. Its activity is regulated as follows. Enol-oxaloacetate inhibits the succinate dehydrogenase activity. In terms of biological role, iron-sulfur protein (IP) subunit of the succinate dehydrogenase complex (mitochondrial respiratory chain complex II), responsible for transferring electrons from succinate to ubiquinone (coenzyme Q). SDH also oxidizes malate to the non-canonical enol form of oxaloacetate, enol-oxaloacetate. Enol-oxaloacetate, which is a potent inhibitor of the succinate dehydrogenase activity, is further isomerized into keto-oxaloacetate. This is Succinate dehydrogenase [ubiquinone] iron-sulfur subunit, mitochondrial (SDHB) from Sus scrofa (Pig).